A 159-amino-acid chain; its full sequence is Small ribosomal subunit protein uS4 (159 aa).

An S4 RNA-binding domain is found at 106 to 158 (RRLQTLVFRMGLAKSIHHARQLVVHGHVLVAGRRVTSPGFLVPRELEDKITIE).

The protein belongs to the universal ribosomal protein uS4 family. As to quaternary structure, part of the 30S ribosomal subunit. Contacts protein S5. The interaction surface between S4 and S5 is involved in control of translational fidelity.

In terms of biological role, one of the primary rRNA binding proteins, it binds directly to 16S rRNA where it nucleates assembly of the body of the 30S subunit. Its function is as follows. With S5 and S12 plays an important role in translational accuracy. In Pyrobaculum calidifontis (strain DSM 21063 / JCM 11548 / VA1), this protein is Small ribosomal subunit protein uS4.